The primary structure comprises 220 residues: GTP cyclohydrolase 1 (220 aa).

Residues cysteine 109, histidine 112, and cysteine 180 each contribute to the Zn(2+) site.

It belongs to the GTP cyclohydrolase I family. As to quaternary structure, homomer.

The catalysed reaction is GTP + H2O = 7,8-dihydroneopterin 3'-triphosphate + formate + H(+). Its pathway is cofactor biosynthesis; 7,8-dihydroneopterin triphosphate biosynthesis; 7,8-dihydroneopterin triphosphate from GTP: step 1/1. This is GTP cyclohydrolase 1 from Edwardsiella ictaluri (strain 93-146).